The chain runs to 485 residues: Ribulose bisphosphate carboxylase large chain (485 aa).

Asn-124 and Thr-174 together coordinate substrate. The Proton acceptor role is filled by Lys-176. Lys-178 contributes to the substrate binding site. Mg(2+) contacts are provided by Lys-202, Asp-204, and Glu-205. N6-carboxylysine is present on Lys-202. His-294 acts as the Proton acceptor in catalysis. 3 residues coordinate substrate: Arg-295, His-327, and Ser-379.

Belongs to the RuBisCO large chain family. Type I subfamily. Heterohexadecamer of 8 large chains and 8 small chains. It depends on Mg(2+) as a cofactor.

It carries out the reaction 2 (2R)-3-phosphoglycerate + 2 H(+) = D-ribulose 1,5-bisphosphate + CO2 + H2O. The catalysed reaction is D-ribulose 1,5-bisphosphate + O2 = 2-phosphoglycolate + (2R)-3-phosphoglycerate + 2 H(+). Functionally, ruBisCO catalyzes two reactions: the carboxylation of D-ribulose 1,5-bisphosphate, the primary event in carbon dioxide fixation, as well as the oxidative fragmentation of the pentose substrate. Both reactions occur simultaneously and in competition at the same active site. The chain is Ribulose bisphosphate carboxylase large chain from Rhodopseudomonas palustris (strain BisA53).